Reading from the N-terminus, the 224-residue chain is Oxalate oxidase GF-3.8 (224 aa).

An N-terminal signal peptide occupies residues 1–23; that stretch reads MGYSKNIASGMFAMLLLASAVLS. A disulfide bridge connects residues Cys33 and Cys49. The Cupin type-1 domain maps to 63 to 214; the sequence is SKLAKAGNTS…ALRVEAGVVE (152 aa). 2 N-linked (GlcNAc...) asparagine glycosylation sites follow: Asn70 and Asn75. Mn(2+) contacts are provided by His111, His113, Glu118, and His160.

The protein belongs to the germin family. Oligomer (believed to be a pentamer but probably hexamer).

The protein resides in the secreted. Its subcellular location is the extracellular space. The protein localises to the apoplast. It localises to the cytoplasm. It is found in the cell wall. The catalysed reaction is oxalate + O2 + 2 H(+) = H2O2 + 2 CO2. In terms of biological role, produces developmental and stress-related release of hydrogen peroxide in the apoplast. May play an important role in several aspects of plant growth and defense mechanisms. This is Oxalate oxidase GF-3.8 from Triticum aestivum (Wheat).